A 271-amino-acid chain; its full sequence is 4-hydroxy-tetrahydrodipicolinate reductase (271 aa).

NAD(+) is bound by residues 10–15 (GAGGRM), Glu36, 100–102 (GTT), and 124–127 (SGNM). His157 serves as the catalytic Proton donor/acceptor. Position 158 (His158) interacts with (S)-2,3,4,5-tetrahydrodipicolinate. The active-site Proton donor is the Lys161. 167–168 (GT) provides a ligand contact to (S)-2,3,4,5-tetrahydrodipicolinate.

Belongs to the DapB family.

The protein resides in the cytoplasm. It carries out the reaction (S)-2,3,4,5-tetrahydrodipicolinate + NAD(+) + H2O = (2S,4S)-4-hydroxy-2,3,4,5-tetrahydrodipicolinate + NADH + H(+). It catalyses the reaction (S)-2,3,4,5-tetrahydrodipicolinate + NADP(+) + H2O = (2S,4S)-4-hydroxy-2,3,4,5-tetrahydrodipicolinate + NADPH + H(+). Its pathway is amino-acid biosynthesis; L-lysine biosynthesis via DAP pathway; (S)-tetrahydrodipicolinate from L-aspartate: step 4/4. Its function is as follows. Catalyzes the conversion of 4-hydroxy-tetrahydrodipicolinate (HTPA) to tetrahydrodipicolinate. This is 4-hydroxy-tetrahydrodipicolinate reductase from Bradyrhizobium diazoefficiens (strain JCM 10833 / BCRC 13528 / IAM 13628 / NBRC 14792 / USDA 110).